The following is a 177-amino-acid chain: ATP synthase subunit delta (177 aa).

The protein belongs to the ATPase delta chain family. In terms of assembly, F-type ATPases have 2 components, F(1) - the catalytic core - and F(0) - the membrane proton channel. F(1) has five subunits: alpha(3), beta(3), gamma(1), delta(1), epsilon(1). F(0) has three main subunits: a(1), b(2) and c(10-14). The alpha and beta chains form an alternating ring which encloses part of the gamma chain. F(1) is attached to F(0) by a central stalk formed by the gamma and epsilon chains, while a peripheral stalk is formed by the delta and b chains.

Its subcellular location is the cell inner membrane. Functionally, f(1)F(0) ATP synthase produces ATP from ADP in the presence of a proton or sodium gradient. F-type ATPases consist of two structural domains, F(1) containing the extramembraneous catalytic core and F(0) containing the membrane proton channel, linked together by a central stalk and a peripheral stalk. During catalysis, ATP synthesis in the catalytic domain of F(1) is coupled via a rotary mechanism of the central stalk subunits to proton translocation. In terms of biological role, this protein is part of the stalk that links CF(0) to CF(1). It either transmits conformational changes from CF(0) to CF(1) or is implicated in proton conduction. This chain is ATP synthase subunit delta, found in Vibrio parahaemolyticus serotype O3:K6 (strain RIMD 2210633).